Reading from the N-terminus, the 349-residue chain is Phloroglucinol synthase (349 aa).

The active site involves Cys-138.

Belongs to the thiolase-like superfamily. Chalcone/stilbene synthases family.

It carries out the reaction 3 malonyl-CoA + 3 H(+) = 1,3,5-trihydroxybenzene + 3 CO2 + 3 CoA. It participates in antibiotic biosynthesis. Type III polyketide synthase that catalyzes the synthesis of phloroglucinol from three molecules of malonyl-CoA. In addition to its ability to produce phloroglucinol from malonyl-CoA, it exhibits broad substrate specificity, accepting C4-C12 aliphatic acyl-CoAs and phenylacetyl-CoA as the starters to form C6-polyoxoalkylated alpha-pyrones from sequential condensation with malonyl-CoA. This is Phloroglucinol synthase from Pseudomonas fluorescens (strain ATCC BAA-477 / NRRL B-23932 / Pf-5).